A 101-amino-acid chain; its full sequence is Large ribosomal subunit protein uL23 (101 aa).

It belongs to the universal ribosomal protein uL23 family. Part of the 50S ribosomal subunit. Contacts protein L29, and trigger factor when it is bound to the ribosome.

Its function is as follows. One of the early assembly proteins it binds 23S rRNA. One of the proteins that surrounds the polypeptide exit tunnel on the outside of the ribosome. Forms the main docking site for trigger factor binding to the ribosome. This Kocuria rhizophila (strain ATCC 9341 / DSM 348 / NBRC 103217 / DC2201) protein is Large ribosomal subunit protein uL23.